Consider the following 619-residue polypeptide: Putative zinc transporter At3g08650 (619 aa).

15 consecutive transmembrane segments (helical) span residues 25-45, 102-122, 129-149, 155-175, 198-218, 230-250, 261-281, 289-309, 354-374, 383-403, 405-425, 465-485, 528-548, 552-572, and 585-605; these read MMHS…VVFI, VALF…PFFF, WAGI…FDLV, HGSG…IWLC, VVLV…GVGV, LLVT…VSMV, AMLW…PAFL, FLPF…IAEV, GFFV…FLVA, HALL…WRPL, LLLS…IGAG, LLAC…LGVA, AAAL…LAGI, GLDH…WQVI, and VGMV…RLVC.

The protein belongs to the ZIP transporter (TC 2.A.5) family. ZupT subfamily.

The protein localises to the membrane. May transport zinc. This is Putative zinc transporter At3g08650 from Arabidopsis thaliana (Mouse-ear cress).